The following is a 147-amino-acid chain: Large ribosomal subunit protein uL16 (147 aa).

It belongs to the universal ribosomal protein uL16 family. Part of the 50S ribosomal subunit.

Functionally, binds 23S rRNA and is also seen to make contacts with the A and possibly P site tRNAs. The protein is Large ribosomal subunit protein uL16 of Clostridium tetani (strain Massachusetts / E88).